The chain runs to 84 residues: Small ribosomal subunit protein bS16c (84 aa).

This sequence belongs to the bacterial ribosomal protein bS16 family.

The protein localises to the plastid. The protein resides in the chloroplast. In Mesostigma viride (Green alga), this protein is Small ribosomal subunit protein bS16c.